Reading from the N-terminus, the 357-residue chain is MSESMFSRRDFLLGGTALAGTLLLDSFGDWRRRAEAAEGEVNLYSGRHYNTDNQIYREFTQKTGIKVNLIEGEADALLARLKSEGSRSPADVFITVDAGRLWQATQANLLRPLTQAQAPKLYQAVPANLRDPQGRWFALSKRARVIMYNRDRVNASQLSTYEDLANPKWRNQILVRSSSNVYNLSLTGEMIAADGAAKTEAWARGLVQNFARQPQGGDTPQILACAAGVGSLAIANTYYLVRLFKSKKAEEREAARKIKVFFPNQKGRGTHVNISGAGIVRTAPNPRAAQLLLEYLLSSQAQAVFARGNGEYPVLRGVSLDPILAGFGQFKESKISASVFGANNAQALQLMDRAGWK.

The tat-type signal signal peptide spans 1 to 36 (MSESMFSRRDFLLGGTALAGTLLLDSFGDWRRRAEA). Residues H48, Y49, Y182, Y238, and Y239 each coordinate Fe cation.

The protein belongs to the bacterial solute-binding protein 1 family. Predicted to be exported by the Tat system. The position of the signal peptide cleavage has not been experimentally proven.

The protein resides in the cellular thylakoid membrane. Functionally, plays an important role in protecting the acceptor side of photosystem II (PSII) against oxidative damage, especially under iron-limiting growth conditions. In terms of biological role, may also be part of a periplasmic ABC transporter complex involved in iron import. The protein is Iron deficiency-induced protein A (idiA) of Synechococcus elongatus (strain ATCC 33912 / PCC 7942 / FACHB-805) (Anacystis nidulans R2).